The primary structure comprises 402 residues: Protein FixF (402 aa).

This is Protein FixF (fixF) from Sinorhizobium fredii (strain NBRC 101917 / NGR234).